We begin with the raw amino-acid sequence, 246 residues long: MSKQRDKGRIYEKRRAKFQELQKKIGITFQNEKLLIQAFTHSSYVNEHRRRFHEDNERLEFLGDAVLELTVSQYLFQKFPHMSEGQLTKLRAAIVCEPSLVKFANALSFGELVLLGKGEELTGGRTRPALLADVFEAFIGALYLDQGMDVVLRFLGQTMFPKIDEGAFSHVMDFKSQLQELVQRDGSGTLEYAILEEKGPAHNKEFVARVALNGQELGVGVGRSKKEAEQHAAQMALETLRAADKQ.

The RNase III domain occupies 18–147 (FQELQKKIGI…FIGALYLDQG (130 aa)). Glu-60 is a Mg(2+) binding site. Residue Asp-64 is part of the active site. Asp-133 and Glu-136 together coordinate Mg(2+). Glu-136 is a catalytic residue. The 70-residue stretch at 173 to 242 (DFKSQLQELV…AQMALETLRA (70 aa)) folds into the DRBM domain.

It belongs to the ribonuclease III family. As to quaternary structure, homodimer. Requires Mg(2+) as cofactor.

It localises to the cytoplasm. The enzyme catalyses Endonucleolytic cleavage to 5'-phosphomonoester.. Functionally, digests double-stranded RNA. Involved in the processing of primary rRNA transcript to yield the immediate precursors to the large and small rRNAs (23S and 16S). Processes some mRNAs, and tRNAs when they are encoded in the rRNA operon. Processes pre-crRNA and tracrRNA of type II CRISPR loci if present in the organism. The chain is Ribonuclease 3 from Geobacillus thermodenitrificans (strain NG80-2).